A 244-amino-acid polypeptide reads, in one-letter code: Ribonuclease PH (244 aa).

Residues Arg86 and 124 to 126 each bind phosphate; that span reads GTR.

This sequence belongs to the RNase PH family. As to quaternary structure, homohexameric ring arranged as a trimer of dimers.

It catalyses the reaction tRNA(n+1) + phosphate = tRNA(n) + a ribonucleoside 5'-diphosphate. Its function is as follows. Phosphorolytic 3'-5' exoribonuclease that plays an important role in tRNA 3'-end maturation. Removes nucleotide residues following the 3'-CCA terminus of tRNAs; can also add nucleotides to the ends of RNA molecules by using nucleoside diphosphates as substrates, but this may not be physiologically important. Probably plays a role in initiation of 16S rRNA degradation (leading to ribosome degradation) during starvation. This Oceanobacillus iheyensis (strain DSM 14371 / CIP 107618 / JCM 11309 / KCTC 3954 / HTE831) protein is Ribonuclease PH.